Here is a 194-residue protein sequence, read N- to C-terminus: dTTP/UTP pyrophosphatase (194 aa).

Residue D69 is the Proton acceptor of the active site.

This sequence belongs to the Maf family. YhdE subfamily. A divalent metal cation is required as a cofactor.

The protein localises to the cytoplasm. It catalyses the reaction dTTP + H2O = dTMP + diphosphate + H(+). It carries out the reaction UTP + H2O = UMP + diphosphate + H(+). In terms of biological role, nucleoside triphosphate pyrophosphatase that hydrolyzes dTTP and UTP. May have a dual role in cell division arrest and in preventing the incorporation of modified nucleotides into cellular nucleic acids. The protein is dTTP/UTP pyrophosphatase of Moorella thermoacetica (strain ATCC 39073 / JCM 9320).